A 148-amino-acid polypeptide reads, in one-letter code: MSEQQPRVIESKEIMTLLPHRYPFLLVDRVLDFKEGEWLKAIKNISVNEPCFTGHFPGEPILPGVLILEALAQAMGILAFKTLELKGGELFYFAGIDEARFKRPVLPGDQMELNVQVIKERRGITAFTGVATVNGEIACEAKLMCARR.

The active site involves histidine 55.

This sequence belongs to the thioester dehydratase family. FabZ subfamily.

The protein localises to the cytoplasm. It catalyses the reaction a (3R)-hydroxyacyl-[ACP] = a (2E)-enoyl-[ACP] + H2O. Its function is as follows. Involved in unsaturated fatty acids biosynthesis. Catalyzes the dehydration of short chain beta-hydroxyacyl-ACPs and long chain saturated and unsaturated beta-hydroxyacyl-ACPs. This is 3-hydroxyacyl-[acyl-carrier-protein] dehydratase FabZ from Haemophilus influenzae (strain PittEE).